The chain runs to 394 residues: Putative pectate lyase 17 (394 aa).

An N-terminal signal peptide occupies residues 1 to 22 (MTHFTVSCLLVALFLCQSLVHA). Aspartate 192, aspartate 216, and aspartate 220 together coordinate Ca(2+). The active site involves arginine 272.

It belongs to the polysaccharide lyase 1 family. Requires Ca(2+) as cofactor.

The enzyme catalyses Eliminative cleavage of (1-&gt;4)-alpha-D-galacturonan to give oligosaccharides with 4-deoxy-alpha-D-galact-4-enuronosyl groups at their non-reducing ends.. It functions in the pathway glycan metabolism; pectin degradation; 2-dehydro-3-deoxy-D-gluconate from pectin: step 2/5. The protein is Putative pectate lyase 17 of Arabidopsis thaliana (Mouse-ear cress).